Consider the following 258-residue polypeptide: ProSAAS (258 aa).

An N-terminal signal peptide occupies residues Met-1–Ser-33. The proSAAS(1-180) stretch occupies residues Ala-34–Pro-213. Disordered regions lie at residues Pro-156–Val-188, Ser-204–Pro-230, and Arg-239–Pro-258. The span at Asp-177–Val-188 shows a compositional bias: acidic residues. Low complexity predominate over residues Ser-204–Pro-213. The tract at residues Ser-219–Pro-258 is C-terminal inhibitory domain; interacts with PCSK1. Residues Leu-237–Arg-242 carry the Sufficient for inhibition of PCSK1 motif.

Interacts via the C-terminal inhibitory domain with PCSK1 66 kDa form. In terms of processing, proteolytically cleaved in the Golgi. Little SAAS, PEN, PEN-20 and Big LEN are the major processed peptides in proSAAS-overexpressing AtT-20 pituitary corticotropic cell line. In terms of tissue distribution, expressed in brain (mostly hypothalamus and pituitary) and gut. Expressed in trigeminal ganglia and neuroendocrine cell lines. As to expression, expressed in pancreas, spinal cord and brain (most abundant in striatum, hippocampus, pons and medulla, and cortex) (at protein level).

The protein localises to the secreted. It localises to the golgi apparatus. It is found in the trans-Golgi network. Functionally, may function in the control of the neuroendocrine secretory pathway. Proposed be a specific endogenous inhibitor of PCSK1. ProSAAS and Big PEN-LEN, both containing the C-terminal inhibitory domain, but not the processed peptides reduce PCSK1 activity in the endoplasmic reticulum and Golgi. It reduces the activity of the 87 kDa form but not the autocatalytically derived 66 kDa form of PCSK1. Subsequent processing of proSAAS may eliminate the inhibition. Slows down convertase-mediated processing of proopiomelanocortin and proenkephalin. May control the intracellular timing of PCSK1 rather than its total level of activity. Its function is as follows. Endogenous ligand for GPR171. Neuropeptide involved in the regulation of feeding. Endogenous ligand for GPR171. Neuropeptide involved in the regulation of feeding. The polypeptide is ProSAAS (Pcsk1n) (Mus musculus (Mouse)).